Reading from the N-terminus, the 649-residue chain is DNA topoisomerase 3 (649 aa).

The Toprim domain maps to 1 to 134 (MRLFIAEKPS…KRQQVRRCLI (134 aa)). Mg(2+) contacts are provided by E7, D103, and D105. A Topo IA-type catalytic domain is found at 155 to 603 (FVPLCVSALA…PLVGTLYQLI (449 aa)). Residues 194 to 199 (SVGRVQ) form an interaction with DNA region. Catalysis depends on Y328, which acts as the O-(5'-phospho-DNA)-tyrosine intermediate. Positions 614–649 (FRGIVAPGGGDKKKSAPRKRAGKKSPPAAETGRQTE) are disordered.

The protein belongs to the type IA topoisomerase family. Mg(2+) is required as a cofactor.

The enzyme catalyses ATP-independent breakage of single-stranded DNA, followed by passage and rejoining.. Functionally, releases the supercoiling and torsional tension of DNA, which is introduced during the DNA replication and transcription, by transiently cleaving and rejoining one strand of the DNA duplex. Introduces a single-strand break via transesterification at a target site in duplex DNA. The scissile phosphodiester is attacked by the catalytic tyrosine of the enzyme, resulting in the formation of a DNA-(5'-phosphotyrosyl)-enzyme intermediate and the expulsion of a 3'-OH DNA strand. The free DNA strand then undergoes passage around the unbroken strand, thus removing DNA supercoils. Finally, in the religation step, the DNA 3'-OH attacks the covalent intermediate to expel the active-site tyrosine and restore the DNA phosphodiester backbone. The chain is DNA topoisomerase 3 from Salmonella typhimurium (strain LT2 / SGSC1412 / ATCC 700720).